The sequence spans 250 residues: 5-oxoprolinase subunit A (250 aa).

The protein belongs to the LamB/PxpA family. In terms of assembly, forms a complex composed of PxpA, PxpB and PxpC.

The catalysed reaction is 5-oxo-L-proline + ATP + 2 H2O = L-glutamate + ADP + phosphate + H(+). Functionally, catalyzes the cleavage of 5-oxoproline to form L-glutamate coupled to the hydrolysis of ATP to ADP and inorganic phosphate. The polypeptide is 5-oxoprolinase subunit A (Paraburkholderia xenovorans (strain LB400)).